Consider the following 208-residue polypeptide: Small ribosomal subunit protein eS8 (208 aa).

The protein belongs to the eukaryotic ribosomal protein eS8 family. In terms of assembly, component of the small ribosomal subunit. Identified in a IGF2BP1-dependent mRNP granule complex containing untranslated mRNAs. Part of the small subunit (SSU) processome, composed of more than 70 proteins and the RNA chaperone small nucleolar RNA (snoRNA) U3.

The protein resides in the cytoplasm. It localises to the membrane. It is found in the nucleus. Its subcellular location is the nucleolus. Component of the small ribosomal subunit. The ribosome is a large ribonucleoprotein complex responsible for the synthesis of proteins in the cell. Part of the small subunit (SSU) processome, first precursor of the small eukaryotic ribosomal subunit. During the assembly of the SSU processome in the nucleolus, many ribosome biogenesis factors, an RNA chaperone and ribosomal proteins associate with the nascent pre-rRNA and work in concert to generate RNA folding, modifications, rearrangements and cleavage as well as targeted degradation of pre-ribosomal RNA by the RNA exosome. The protein is Small ribosomal subunit protein eS8 (rps-8) of Caenorhabditis elegans.